Here is a 181-residue protein sequence, read N- to C-terminus: MASDGRVERIASSIRAIPNFPKPGILFQDITTLLLDPQAFRDTTDLFVERYKDKDITVVAGVEARGFIFGPPIALAIGAKFVPIRKPKKLPGEVISEEYSLEYGTDKIEMHVGAVQPNDRVLIVDDLIATGGTLCAAAKLIERVGAKVVECACVIELPELKGRDKLGDMPVFVLVQADESV.

It belongs to the purine/pyrimidine phosphoribosyltransferase family. In terms of assembly, homodimer.

The protein localises to the cytoplasm. It catalyses the reaction AMP + diphosphate = 5-phospho-alpha-D-ribose 1-diphosphate + adenine. It participates in purine metabolism; AMP biosynthesis via salvage pathway; AMP from adenine: step 1/1. Its function is as follows. Catalyzes a salvage reaction resulting in the formation of AMP, that is energically less costly than de novo synthesis. The protein is Adenine phosphoribosyltransferase 1 (APT1) of Triticum aestivum (Wheat).